A 115-amino-acid polypeptide reads, in one-letter code: Large ribosomal subunit protein bL19 (115 aa).

The protein belongs to the bacterial ribosomal protein bL19 family.

Its function is as follows. This protein is located at the 30S-50S ribosomal subunit interface and may play a role in the structure and function of the aminoacyl-tRNA binding site. The protein is Large ribosomal subunit protein bL19 of Hydrogenovibrio crunogenus (strain DSM 25203 / XCL-2) (Thiomicrospira crunogena).